Here is a 219-residue protein sequence, read N- to C-terminus: MADLKVGSTTGGSVIWHQGNFPLNPAGDDVLYKSFKIYSEYNKPQAADNDLVSKANGGTYLNRVIFNRGIQVPGAGNGLTGMFVGPGDGATYDNVNLDIISWYGIGFKSSQGTGPRTIVFNVRDGEISARGNINSQRQVRAEAAAPIAANDLTRKDYVDGAINTVTANANSRVLRSGDTMTGNLTAPNFFSQNPASQPSHVPRFDQIVIKDSVQDFGYY.

The distal half-fiber contains two molecules each of Gp36 and Gp37 and one molecule of Gp35.

Its subcellular location is the virion. In terms of biological role, structural component of the distal-half tail fiber. The chain is Tail fiber protein p36 (36) from Escherichia coli (Bacteriophage T2).